The sequence spans 594 residues: A-type ATP synthase subunit A (594 aa).

236–243 (GPFGSGKT) is a binding site for ATP.

It belongs to the ATPase alpha/beta chains family. Has multiple subunits with at least A(3), B(3), C, D, E, F, H, I and proteolipid K(x).

Its subcellular location is the cell membrane. It carries out the reaction ATP + H2O + 4 H(+)(in) = ADP + phosphate + 5 H(+)(out). Functionally, component of the A-type ATP synthase that produces ATP from ADP in the presence of a proton gradient across the membrane. The A chain is the catalytic subunit. The protein is A-type ATP synthase subunit A of Pyrobaculum calidifontis (strain DSM 21063 / JCM 11548 / VA1).